We begin with the raw amino-acid sequence, 148 residues long: uncharacterized protein (148 aa).

CBS domains follow at residues 8–68 (MTAD…PNSQ) and 74–130 (MTEK…ERAG). The disordered stretch occupies residues 127–148 (ERAGSALSDISEGDNREEGFFH). Residues 139–148 (GDNREEGFFH) are compositionally biased toward basic and acidic residues.

This is an uncharacterized protein from Bacillus subtilis (strain 168).